The following is a 192-amino-acid chain: E3 ubiquitin-protein ligase RNF183 (192 aa).

Topologically, residues 1–161 (MAEQQGRELE…RECFRNPQFR (161 aa)) are cytoplasmic. An RING-type zinc finger spans residues 13 to 60 (CPVCWNPFNNTFHTPKMLDCCHSFCVECLAHLSLVTPARRRLLCPLCR). Residues 162 to 182 (IFAYLMAVILSVTLLLIFSIF) form a helical; Anchor for type IV membrane protein membrane-spanning segment. Topologically, residues 183 to 192 (WTKQFLWGVG) are lumenal.

Interacts with FATE1. Interacts with SEC16A. Interacts with BCL2L1. Post-translationally, autoubiquitinated (in vitro). In terms of tissue distribution, kidney and testis.

It is found in the endoplasmic reticulum membrane. The protein resides in the endoplasmic reticulum. It localises to the golgi apparatus. Its subcellular location is the cis-Golgi network membrane. The protein localises to the lysosome membrane. It carries out the reaction S-ubiquitinyl-[E2 ubiquitin-conjugating enzyme]-L-cysteine + [acceptor protein]-L-lysine = [E2 ubiquitin-conjugating enzyme]-L-cysteine + N(6)-ubiquitinyl-[acceptor protein]-L-lysine.. It functions in the pathway protein modification; protein ubiquitination. Its function is as follows. Acts as an E3 ubiquitin ligase catalyzing the covalent attachment of ubiquitin moieties onto substrate proteins. Triggers apoptosis in response to prolonged ER stress by mediating the polyubiquitination and subsequent proteasomal degradation of BCL2L1. May collaborate with FATE1 to restrain BIK protein levels thus regulating apoptotic signaling. This Homo sapiens (Human) protein is E3 ubiquitin-protein ligase RNF183 (RNF183).